Reading from the N-terminus, the 547-residue chain is Chaperonin GroEL (547 aa).

ATP contacts are provided by residues 30-33 (TLGP), K51, 87-91 (DGTTT), G415, 479-481 (NAA), and D495.

The protein belongs to the chaperonin (HSP60) family. Forms a cylinder of 14 subunits composed of two heptameric rings stacked back-to-back. Interacts with the co-chaperonin GroES.

It localises to the cytoplasm. The catalysed reaction is ATP + H2O + a folded polypeptide = ADP + phosphate + an unfolded polypeptide.. Together with its co-chaperonin GroES, plays an essential role in assisting protein folding. The GroEL-GroES system forms a nano-cage that allows encapsulation of the non-native substrate proteins and provides a physical environment optimized to promote and accelerate protein folding. The polypeptide is Chaperonin GroEL (Cupriavidus taiwanensis (strain DSM 17343 / BCRC 17206 / CCUG 44338 / CIP 107171 / LMG 19424 / R1) (Ralstonia taiwanensis (strain LMG 19424))).